Consider the following 617-residue polypeptide: Dihydroxy-acid dehydratase (617 aa).

Asp-82 is a Mg(2+) binding site. Cys-123 is a binding site for [2Fe-2S] cluster. Asp-124 and Lys-125 together coordinate Mg(2+). Lys-125 is subject to N6-carboxylysine. Cys-197 is a [2Fe-2S] cluster binding site. Glu-497 is a binding site for Mg(2+). The active-site Proton acceptor is the Ser-523.

Belongs to the IlvD/Edd family. In terms of assembly, homodimer. The cofactor is [2Fe-2S] cluster. Mg(2+) is required as a cofactor.

It catalyses the reaction (2R)-2,3-dihydroxy-3-methylbutanoate = 3-methyl-2-oxobutanoate + H2O. The enzyme catalyses (2R,3R)-2,3-dihydroxy-3-methylpentanoate = (S)-3-methyl-2-oxopentanoate + H2O. It functions in the pathway amino-acid biosynthesis; L-isoleucine biosynthesis; L-isoleucine from 2-oxobutanoate: step 3/4. Its pathway is amino-acid biosynthesis; L-valine biosynthesis; L-valine from pyruvate: step 3/4. Functionally, functions in the biosynthesis of branched-chain amino acids. Catalyzes the dehydration of (2R,3R)-2,3-dihydroxy-3-methylpentanoate (2,3-dihydroxy-3-methylvalerate) into 2-oxo-3-methylpentanoate (2-oxo-3-methylvalerate) and of (2R)-2,3-dihydroxy-3-methylbutanoate (2,3-dihydroxyisovalerate) into 2-oxo-3-methylbutanoate (2-oxoisovalerate), the penultimate precursor to L-isoleucine and L-valine, respectively. This chain is Dihydroxy-acid dehydratase, found in Streptomyces avermitilis (strain ATCC 31267 / DSM 46492 / JCM 5070 / NBRC 14893 / NCIMB 12804 / NRRL 8165 / MA-4680).